The chain runs to 241 residues: Venom nerve growth factor 2 (241 aa).

The first 18 residues, 1–18 (MSMLCYTLITAFLIGIWA), serve as a signal peptide directing secretion. Residues 19-125 (APKSEDNVPL…SLNRNIRAKR (107 aa)) constitute a propeptide that is removed on maturation. A disordered region spans residues 47–67 (GLKTSRNTDQRHPAPQKAEDQ). 3 disulfide bridges follow: C139–C203, C181–C231, and C191–C233.

It belongs to the NGF-beta family. Homodimer; non-covalently linked. Expressed by the venom gland.

The protein resides in the secreted. Its function is as follows. Nerve growth factor is important for the development and maintenance of the sympathetic and sensory nervous systems. It stimulates division and differentiation of sympathetic and embryonic sensory neurons as well as basal forebrain cholinergic neurons in the brain. Its relevance in the snake venom is not clear. However, it has been shown to inhibit metalloproteinase-dependent proteolysis of platelet glycoprotein Ib alpha, suggesting a metalloproteinase inhibition to prevent metalloprotease autodigestion and/or protection against prey proteases. Binds a lipid between the two protein chains in the homodimer. The lipid-bound form promotes histamine relase from mouse mast cells, contrary to the lipid-free form. In Naja sputatrix (Malayan spitting cobra), this protein is Venom nerve growth factor 2.